Here is a 385-residue protein sequence, read N- to C-terminus: GTPase Obg (385 aa).

The Obg domain occupies 1-159 (MKFVDEATIL…REIQLELMLL (159 aa)). The OBG-type G domain maps to 160–333 (ADVGMLGLPN…LCWDVMAFIN (174 aa)). Residues 166–173 (GLPNAGKS), 191–195 (FTTLV), 213–216 (DIPG), 283–286 (NKAD), and 314–316 (SAA) each bind GTP. Residues S173 and T193 each contribute to the Mg(2+) site. Positions 362–379 (QQEEAEETLDDDWDEDGV) are enriched in acidic residues. Residues 362-385 (QQEEAEETLDDDWDEDGVETIYQR) form a disordered region.

It belongs to the TRAFAC class OBG-HflX-like GTPase superfamily. OBG GTPase family. Monomer. Requires Mg(2+) as cofactor.

It is found in the cytoplasm. In terms of biological role, an essential GTPase which binds GTP, GDP and possibly (p)ppGpp with moderate affinity, with high nucleotide exchange rates and a fairly low GTP hydrolysis rate. Plays a role in control of the cell cycle, stress response, ribosome biogenesis and in those bacteria that undergo differentiation, in morphogenesis control. The sequence is that of GTPase Obg from Sodalis glossinidius (strain morsitans).